We begin with the raw amino-acid sequence, 178 residues long: Large ribosomal subunit protein uL5 (178 aa).

Belongs to the universal ribosomal protein uL5 family. In terms of assembly, part of the 50S ribosomal subunit; part of the 5S rRNA/L5/L18/L25 subcomplex. Contacts the 5S rRNA and the P site tRNA. Forms a bridge to the 30S subunit in the 70S ribosome.

This is one of the proteins that bind and probably mediate the attachment of the 5S RNA into the large ribosomal subunit, where it forms part of the central protuberance. In the 70S ribosome it contacts protein S13 of the 30S subunit (bridge B1b), connecting the 2 subunits; this bridge is implicated in subunit movement. Contacts the P site tRNA; the 5S rRNA and some of its associated proteins might help stabilize positioning of ribosome-bound tRNAs. The chain is Large ribosomal subunit protein uL5 from Syntrophomonas wolfei subsp. wolfei (strain DSM 2245B / Goettingen).